The following is a 364-amino-acid chain: Aminomethyltransferase (364 aa).

It belongs to the GcvT family. As to quaternary structure, the glycine cleavage system is composed of four proteins: P, T, L and H.

The catalysed reaction is N(6)-[(R)-S(8)-aminomethyldihydrolipoyl]-L-lysyl-[protein] + (6S)-5,6,7,8-tetrahydrofolate = N(6)-[(R)-dihydrolipoyl]-L-lysyl-[protein] + (6R)-5,10-methylene-5,6,7,8-tetrahydrofolate + NH4(+). The glycine cleavage system catalyzes the degradation of glycine. In Shewanella putrefaciens (strain CN-32 / ATCC BAA-453), this protein is Aminomethyltransferase.